The primary structure comprises 103 residues: Leukocyte cysteine proteinase inhibitor 1 (103 aa).

Met1 carries the post-translational modification Blocked amino end (Met); partial. Residues 1–20 (MESEEMLAGGLTEPRPATPE) form a disordered region. Residues 51-55 (QVVAG) carry the Secondary area of contact motif.

It belongs to the cystatin family.

It localises to the cytoplasm. Its function is as follows. Potent inhibitor of cathepsins L and S, and papain. This Sus scrofa (Pig) protein is Leukocyte cysteine proteinase inhibitor 1.